The following is a 262-amino-acid chain: Hydroxyethylthiazole kinase (262 aa).

Position 43 (Met43) interacts with substrate. The ATP site is built by Arg118 and Thr164. Ala191 lines the substrate pocket.

It belongs to the Thz kinase family. The cofactor is Mg(2+).

The catalysed reaction is 5-(2-hydroxyethyl)-4-methylthiazole + ATP = 4-methyl-5-(2-phosphooxyethyl)-thiazole + ADP + H(+). Its pathway is cofactor biosynthesis; thiamine diphosphate biosynthesis; 4-methyl-5-(2-phosphoethyl)-thiazole from 5-(2-hydroxyethyl)-4-methylthiazole: step 1/1. Functionally, catalyzes the phosphorylation of the hydroxyl group of 4-methyl-5-beta-hydroxyethylthiazole (THZ). The sequence is that of Hydroxyethylthiazole kinase from Cereibacter sphaeroides (strain KD131 / KCTC 12085) (Rhodobacter sphaeroides).